Consider the following 842-residue polypeptide: Unconventional myosin-Ia (842 aa).

Residues glycine 1–arginine 686 enclose the Myosin motor domain. Glycine 93–threonine 100 contributes to the ATP binding site. Residues valine 563–aspartate 585 are actin-binding. IQ domains lie at leucine 689 to methionine 712, arginine 713 to glycine 733, and isoleucine 735 to arginine 764.

It belongs to the TRAFAC class myosin-kinesin ATPase superfamily. Myosin family. Phosphorylated by ALPK1.

In terms of biological role, involved in directing the movement of organelles along actin filaments. The sequence is that of Unconventional myosin-Ia (Myo1a) from Rattus norvegicus (Rat).